A 337-amino-acid polypeptide reads, in one-letter code: Phosphate acyltransferase (337 aa).

Belongs to the PlsX family. Homodimer. Probably interacts with PlsY.

The protein resides in the cytoplasm. The catalysed reaction is a fatty acyl-[ACP] + phosphate = an acyl phosphate + holo-[ACP]. It functions in the pathway lipid metabolism; phospholipid metabolism. Catalyzes the reversible formation of acyl-phosphate (acyl-PO(4)) from acyl-[acyl-carrier-protein] (acyl-ACP). This enzyme utilizes acyl-ACP as fatty acyl donor, but not acyl-CoA. This Aromatoleum aromaticum (strain DSM 19018 / LMG 30748 / EbN1) (Azoarcus sp. (strain EbN1)) protein is Phosphate acyltransferase.